We begin with the raw amino-acid sequence, 407 residues long: Tryptophan 2,3-dioxygenase B (407 aa).

Residues F71–H75 and R143 contribute to the substrate site. H327 contacts heme. Position 341 (T341) interacts with substrate.

The protein belongs to the tryptophan 2,3-dioxygenase family. Homotetramer. Dimer of dimers. Heme is required as a cofactor.

It catalyses the reaction L-tryptophan + O2 = N-formyl-L-kynurenine. The protein operates within amino-acid degradation; L-tryptophan degradation via kynurenine pathway; L-kynurenine from L-tryptophan: step 1/2. Functionally, heme-dependent dioxygenase that catalyzes the oxidative cleavage of the L-tryptophan (L-Trp) pyrrole ring and converts L-tryptophan to N-formyl-L-kynurenine. Catalyzes the oxidative cleavage of the indole moiety. This is Tryptophan 2,3-dioxygenase B from Danio rerio (Zebrafish).